Consider the following 141-residue polypeptide: Small ribosomal subunit protein uS19 (141 aa).

This sequence belongs to the universal ribosomal protein uS19 family.

Protein S19 forms a complex with S13 that binds strongly to the 16S ribosomal RNA. This is Small ribosomal subunit protein uS19 from Halorubrum lacusprofundi (strain ATCC 49239 / DSM 5036 / JCM 8891 / ACAM 34).